The sequence spans 264 residues: Thymidylate synthase (264 aa).

Arg-21 serves as a coordination point for dUMP. His-51 serves as a coordination point for (6R)-5,10-methylene-5,6,7,8-tetrahydrofolate. DUMP is bound at residue 126-127 (RR). Cys-146 serves as the catalytic Nucleophile. DUMP contacts are provided by residues 166-169 (RSAD), Asn-177, and 207-209 (HLY). Asp-169 provides a ligand contact to (6R)-5,10-methylene-5,6,7,8-tetrahydrofolate. Residue Ala-263 coordinates (6R)-5,10-methylene-5,6,7,8-tetrahydrofolate.

This sequence belongs to the thymidylate synthase family. Bacterial-type ThyA subfamily. In terms of assembly, homodimer.

The protein resides in the cytoplasm. The enzyme catalyses dUMP + (6R)-5,10-methylene-5,6,7,8-tetrahydrofolate = 7,8-dihydrofolate + dTMP. The protein operates within pyrimidine metabolism; dTTP biosynthesis. In terms of biological role, catalyzes the reductive methylation of 2'-deoxyuridine-5'-monophosphate (dUMP) to 2'-deoxythymidine-5'-monophosphate (dTMP) while utilizing 5,10-methylenetetrahydrofolate (mTHF) as the methyl donor and reductant in the reaction, yielding dihydrofolate (DHF) as a by-product. This enzymatic reaction provides an intracellular de novo source of dTMP, an essential precursor for DNA biosynthesis. The protein is Thymidylate synthase of Hyphomonas neptunium (strain ATCC 15444).